A 105-amino-acid polypeptide reads, in one-letter code: Small ribosomal subunit protein eS24 (105 aa).

The interval 86-105 is disordered; sequence LERNKIEADEEADEEAAEEA. Over residues 93 to 105 the composition is skewed to acidic residues; that stretch reads ADEEADEEAAEEA.

It belongs to the eukaryotic ribosomal protein eS24 family.

The chain is Small ribosomal subunit protein eS24 from Natronomonas pharaonis (strain ATCC 35678 / DSM 2160 / CIP 103997 / JCM 8858 / NBRC 14720 / NCIMB 2260 / Gabara) (Halobacterium pharaonis).